The chain runs to 475 residues: MAAPRMPPSRLSGIMVPAPIQDLEALRALTALFKEQRNRETAPRTIFQRVLDILKKSTHAVELACRDPSQVEHLASSLQLITECFRCLRNACIECSVNQNSIRNLDTIGVAVDLVLLFRELRVEQDSLLTAFRCGLQFLGNVASRNEESQSIVWVHAFPELFMSCLNHPDKKIVAYCSMILFTSLNAERMKDLEENLNIAINVIEAHQKHPASEWPFLIISDHFLKSPELVEAMYGKLSNQERITLLDIVIAKLVGEEQLTKDDISIFVRHAELIANSFMDQCRNVLKLTSEPHTEDKEALVTIRLLDVLCEMTSNTELLGYLQVFPGLMERVIDVLRVIHEVGKESTNIFSPSDSLKAEGDIEHMTEGFKSHLIRLIGNLCYKNKENQDKVNELDGIPLILDSSNIDDNNPFMMQWVVYAVRNLTEDNSQNQDVIAKMEEQGLADASLLKKMGFEIEKSGDKLILKSNNDIPPP.

Position 10 is an omega-N-methylarginine (Arg-10). 2 positions are modified to phosphoserine: Ser-12 and Ser-77. Position 82 is a phosphothreonine (Thr-82). Phosphoserine is present on Ser-430.

It belongs to the ataxin-10 family. Homooligomer. Interacts with GNB2. Interacts with IQCB1. Interacts with OGT. Interacts with PLK1. Polyubiquitinated. In terms of processing, phosphorylation at Ser-12 by AURKB promotes the association of ATXN10 with PLK1. Phosphorylation at Ser-77 and Thr-82 by PLK1 may play a role in the regulation of cytokinesis and may stimulate the proteasome-mediated degradation of ATXN10. In terms of tissue distribution, in high cell density areas; cerebellar cortex, dentate gyrus, hippocampus, anterior olfactory nucleus, primary olfactory cortex.

The protein resides in the cytoplasm. The protein localises to the perinuclear region. It localises to the midbody. Its subcellular location is the cytoskeleton. It is found in the cilium basal body. The protein resides in the microtubule organizing center. The protein localises to the centrosome. It localises to the centriole. Its function is as follows. May play a role in the regulation of cytokinesis. May play a role in signaling by stimulating protein glycosylation. Induces neuritogenesis by activating the Ras-MAP kinase pathway and is necessary for the survival of cerebellar neurons. Does not appear to play a major role in ciliogenesis. The chain is Ataxin-10 (Atxn10) from Mus musculus (Mouse).